The following is a 474-amino-acid chain: L-arabinose isomerase (474 aa).

Positions 306, 331, 348, and 447 each coordinate Mn(2+).

This sequence belongs to the arabinose isomerase family. Mn(2+) is required as a cofactor.

The enzyme catalyses beta-L-arabinopyranose = L-ribulose. It functions in the pathway carbohydrate degradation; L-arabinose degradation via L-ribulose; D-xylulose 5-phosphate from L-arabinose (bacterial route): step 1/3. Functionally, catalyzes the conversion of L-arabinose to L-ribulose. The sequence is that of L-arabinose isomerase from Lactiplantibacillus plantarum (strain ATCC BAA-793 / NCIMB 8826 / WCFS1) (Lactobacillus plantarum).